Consider the following 444-residue polypeptide: E1B 55 kDa protein (444 aa).

A disordered region spans residues 1 to 35; that stretch reads MEQNADMEPDRQVNQRPPRFRARGAGVRGRGRVRR. Residues serine 438 and serine 439 each carry the phosphoserine modification.

The protein belongs to the adenoviridae E1B 55 kDa protein family. Interacts with host PML-4 and PML-5; this interaction promotes efficient subnuclear targeting of E1B-55K to PML nuclear bodies. Interacts with E4-ORF3 protein. Interacts with E4-ORF6 protein.

It localises to the host nucleus. It is found in the host cytoplasm. In terms of biological role, plays a major role to prevent cellular inhibition of viral genome replication. Assembles an SCF-like E3 ubiquitin ligase complex based on the cellular proteins ELOB, ELOC, CUL5 and RBX1, in cooperation with viral E4orf6. This viral RING-type ligase ubiquitinates cellular substrates and targets them to proteasomal degradation: TP53/p53, LIG4, MRE11-RAD50-NBS1 (MRN) complex, ITGA3, DAXX and BLM. E1B-55K probably acts as the substrate-specific adapter of the SCF-like E3 ubiquitin ligase complex. Degradation of host TP53/p53 activity is essential for preventing E1A-induced TP53 accumulation that would otherwise lead to cell apoptosis and growth arrest. E1B-55K also inactivates TP53 transcription-factor activity by binding its transactivation domain. E1B-55K also functions as a SUMO1 E3 ligase for TP53 which causes the latter to be sequestered in promyelocytic leukemia (PML) nuclear bodies thereby contributing to maximal inhibition of TP53 function. This chain is E1B 55 kDa protein, found in Canis lupus familiaris (Dog).